A 383-amino-acid polypeptide reads, in one-letter code: Succinyl-diaminopimelate desuccinylase (383 aa).

Zn(2+) is bound at residue His-74. The active site involves Asp-76. Asp-107 serves as a coordination point for Zn(2+). Catalysis depends on Glu-141, which acts as the Proton acceptor. Zn(2+) contacts are provided by Glu-142, Glu-170, and His-356.

The protein belongs to the peptidase M20A family. DapE subfamily. Homodimer. The cofactor is Zn(2+). Co(2+) is required as a cofactor.

It carries out the reaction N-succinyl-(2S,6S)-2,6-diaminopimelate + H2O = (2S,6S)-2,6-diaminopimelate + succinate. It functions in the pathway amino-acid biosynthesis; L-lysine biosynthesis via DAP pathway; LL-2,6-diaminopimelate from (S)-tetrahydrodipicolinate (succinylase route): step 3/3. Catalyzes the hydrolysis of N-succinyl-L,L-diaminopimelic acid (SDAP), forming succinate and LL-2,6-diaminopimelate (DAP), an intermediate involved in the bacterial biosynthesis of lysine and meso-diaminopimelic acid, an essential component of bacterial cell walls. In Cupriavidus necator (strain ATCC 17699 / DSM 428 / KCTC 22496 / NCIMB 10442 / H16 / Stanier 337) (Ralstonia eutropha), this protein is Succinyl-diaminopimelate desuccinylase.